The sequence spans 179 residues: CASP-like protein 5A2 (179 aa).

Residues 1-54 lie on the Cytoplasmic side of the membrane; the sequence is MEATSHPAVHPVAVPPQFQGAGPPAIQMKDFPGSPGTAGGLALRFTQFGFSLIS. A run of 2 helical transmembrane segments spans residues 55–75 and 76–96; these read LCIMVSIAGFSSVTAFCFLVA and TMVFQCIWSLCLGALDIYALL. Over 97 to 114 the chain is Cytoplasmic; it reads TQRSFRNPLIVSLFVVGD. Residues 115–135 traverse the membrane as a helical segment; it reads WVTSTMTFAGACAAAGITVLI. At 136–154 the chain is on the extracellular side; it reads DNDLEQCGPNHCGRFEAAA. A helical membrane pass occupies residues 155 to 175; it reads AMAFMSWTATTLSFCLSFWLL. Topologically, residues 176 to 179 are cytoplasmic; the sequence is ASCR.

The protein belongs to the Casparian strip membrane proteins (CASP) family. In terms of assembly, homodimer and heterodimers.

The protein localises to the cell membrane. The polypeptide is CASP-like protein 5A2 (Physcomitrium patens (Spreading-leaved earth moss)).